The chain runs to 155 residues: MSRRGTAEKKTAKSDPIYRNRLVNMLVNRILKHGKKSLAYQIIYRAVKKIQQKTETNPLSVLRQAIRGVTPNITVKARRVGGSTHQVPIEIGSTQGKALAVRWLLAASRKRPGRDMAFKLSSELVDAAKGSGDAIRKKEETLRMAEANRAFAHFR.

The protein belongs to the universal ribosomal protein uS7 family. In terms of assembly, part of the 30S ribosomal subunit.

Its subcellular location is the plastid. The protein resides in the chloroplast. Its function is as follows. One of the primary rRNA binding proteins, it binds directly to 16S rRNA where it nucleates assembly of the head domain of the 30S subunit. The chain is Small ribosomal subunit protein uS7cz/uS7cy (rps7-A) from Ipomoea purpurea (Common morning glory).